A 79-amino-acid chain; its full sequence is Raniseptin-3 (79 aa).

The N-terminal stretch at 1–22 is a signal peptide; it reads MAFLKKSLFLVLFLGIVSLSIC. Positions 23–49 are excised as a propeptide; it reads EEEKREGEEEEKQEEENEELSEEELRE.

Belongs to the frog skin active peptide (FSAP) family. Dermaseptin subfamily. As to expression, expressed by the skin glands.

Its subcellular location is the secreted. Has antibacterial activity. The sequence is that of Raniseptin-3 from Boana raniceps (Chaco tree frog).